We begin with the raw amino-acid sequence, 267 residues long: 5'-nucleotidase SurE (267 aa).

A divalent metal cation-binding residues include Asp-9, Asp-10, Ser-41, and Asn-95.

The protein belongs to the SurE nucleotidase family. It depends on a divalent metal cation as a cofactor.

Its subcellular location is the cytoplasm. It carries out the reaction a ribonucleoside 5'-phosphate + H2O = a ribonucleoside + phosphate. Nucleotidase that shows phosphatase activity on nucleoside 5'-monophosphates. The polypeptide is 5'-nucleotidase SurE (Aeropyrum pernix (strain ATCC 700893 / DSM 11879 / JCM 9820 / NBRC 100138 / K1)).